Here is a 119-residue protein sequence, read N- to C-terminus: Phosphoribosyl-AMP cyclohydrolase (119 aa).

Mg(2+) is bound at residue Asp77. Cys78 is a Zn(2+) binding site. 2 residues coordinate Mg(2+): Asp79 and Asp81. Zn(2+)-binding residues include Cys94 and Cys101.

This sequence belongs to the PRA-CH family. Homodimer. It depends on Mg(2+) as a cofactor. Zn(2+) serves as cofactor.

It localises to the cytoplasm. It carries out the reaction 1-(5-phospho-beta-D-ribosyl)-5'-AMP + H2O = 1-(5-phospho-beta-D-ribosyl)-5-[(5-phospho-beta-D-ribosylamino)methylideneamino]imidazole-4-carboxamide. Its pathway is amino-acid biosynthesis; L-histidine biosynthesis; L-histidine from 5-phospho-alpha-D-ribose 1-diphosphate: step 3/9. Catalyzes the hydrolysis of the adenine ring of phosphoribosyl-AMP. This chain is Phosphoribosyl-AMP cyclohydrolase, found in Cereibacter sphaeroides (strain ATCC 17023 / DSM 158 / JCM 6121 / CCUG 31486 / LMG 2827 / NBRC 12203 / NCIMB 8253 / ATH 2.4.1.) (Rhodobacter sphaeroides).